We begin with the raw amino-acid sequence, 476 residues long: RuvB-like helicase 2 (476 aa).

Position 76-83 (76-83) interacts with ATP; the sequence is GPPSTGKT.

This sequence belongs to the RuvB family. In terms of assembly, may form heterododecamers with RVB1. Component of the SWR1 chromatin remodeling complex, the INO80 chromatin remodeling complex, and of the R2TP complex.

The protein resides in the nucleus. It catalyses the reaction ATP + H2O = ADP + phosphate + H(+). In terms of biological role, DNA helicase which participates in several chromatin remodeling complexes, including the SWR1 and the INO80 complexes. The SWR1 complex mediates the ATP-dependent exchange of histone H2A for the H2A variant HZT1 leading to transcriptional regulation of selected genes by chromatin remodeling. The INO80 complex remodels chromatin by shifting nucleosomes and is involved in DNA repair. Also involved in pre-rRNA processing. The chain is RuvB-like helicase 2 (RVB2) from Candida glabrata (strain ATCC 2001 / BCRC 20586 / JCM 3761 / NBRC 0622 / NRRL Y-65 / CBS 138) (Yeast).